The primary structure comprises 439 residues: Amino-acid acetyltransferase (439 aa).

The region spanning 289–429 (EDIRIATVQD…DHYNYQRRSK (141 aa)) is the N-acetyltransferase domain.

The protein belongs to the acetyltransferase family. ArgA subfamily.

The protein resides in the cytoplasm. The enzyme catalyses L-glutamate + acetyl-CoA = N-acetyl-L-glutamate + CoA + H(+). The protein operates within amino-acid biosynthesis; L-arginine biosynthesis; N(2)-acetyl-L-ornithine from L-glutamate: step 1/4. The protein is Amino-acid acetyltransferase of Mannheimia succiniciproducens (strain KCTC 0769BP / MBEL55E).